The chain runs to 595 residues: Solute carrier family 13 member 1 (595 aa).

5 helical membrane passes run 13–33 (FLFV…LHTK), 41–61 (LFVV…TALL), 77–97 (VASA…CLAT), 108–128 (IALK…LGFM), and 131–151 (TAFL…MPIA). 2 N-linked (GlcNAc...) asparagine glycosylation sites follow: Asn174 and Asn207. Transmembrane regions (helical) follow at residues 239 to 259 (LTCL…ITGT), 290 to 310 (PAAL…FLGF), 348 to 368 (IVTL…DPGF), 381 to 401 (GFAT…LIPA), 464 to 484 (PLGS…VTSL), 491 to 511 (PATI…IHVN), 512 to 532 (PLYI…LPVA), and 554 to 574 (GLGV…TWIV). The N-linked (GlcNAc...) asparagine glycan is linked to Asn591.

Belongs to the SLC13A/DASS transporter (TC 2.A.47) family. NADC subfamily. As to expression, highly expressed in kidney; not detectable in the other tissues tested.

The protein localises to the apical cell membrane. The catalysed reaction is sulfate(out) + 3 Na(+)(out) = sulfate(in) + 3 Na(+)(in). It catalyses the reaction selenate(out) + 3 Na(+)(out) = selenate(in) + 3 Na(+)(in). The enzyme catalyses thiosulfate(out) + 3 Na(+)(out) = thiosulfate(in) + 3 Na(+)(in). Its activity is regulated as follows. Inhibited by thiosulfate, selenate, molybdate, tungstate, citrate and succinate. Functionally, sodium:sulfate symporter that mediates sulfate reabsorption in the kidney and small intestine. Can also mediate the transport of selenate and thiosulfate. This chain is Solute carrier family 13 member 1 (SLC13A1), found in Homo sapiens (Human).